A 190-amino-acid chain; its full sequence is UPF0200 protein TGAM_0868 (190 aa).

Residue 7–14 (GMPGSGKS) coordinates ATP.

Belongs to the UPF0200 family.

The sequence is that of UPF0200 protein TGAM_0868 from Thermococcus gammatolerans (strain DSM 15229 / JCM 11827 / EJ3).